The following is a 106-amino-acid chain: Small ribosomal subunit protein uS10 (106 aa).

This sequence belongs to the universal ribosomal protein uS10 family. In terms of assembly, part of the 30S ribosomal subunit.

Involved in the binding of tRNA to the ribosomes. This Synechococcus sp. (strain CC9605) protein is Small ribosomal subunit protein uS10.